The following is a 503-amino-acid chain: Putative cytochrome P450 71A28 (503 aa).

A helical transmembrane segment spans residues 1–21 (MILISLCFTTFLAFLFLNPLL). Cys-443 contacts heme.

The protein belongs to the cytochrome P450 family. The cofactor is heme.

It localises to the membrane. This chain is Putative cytochrome P450 71A28 (CYP71A28), found in Arabidopsis thaliana (Mouse-ear cress).